The chain runs to 490 residues: Transmembrane protein 185-like (490 aa).

Over residues 1 to 31 the composition is skewed to low complexity; the sequence is MIENENTSLLSTSSSSTSSSPNNANSPSSLN. 2 disordered regions span residues 1 to 151 and 455 to 490; these read MIEN…SKYK and NMIN…ISNL. A compositionally biased stretch (polar residues) spans 47–59; that stretch reads TSGNNSPSAQITK. Low complexity-rich tracts occupy residues 66–80 and 89–108; these read SNNS…NSRS and NNNN…NNIN. Residues 109–125 are compositionally biased toward polar residues; the sequence is KHNSIVYNKSNNKLNSI. Gly residues predominate over residues 133–145; it reads QGGGGGNGNGNGN. Over residues 463 to 472 the composition is skewed to acidic residues; it reads SESESDDETE.

This sequence belongs to the TMEM185 family.

The chain is Transmembrane protein 185-like from Dictyostelium discoideum (Social amoeba).